The sequence spans 601 residues: Potassium-transporting ATPase potassium-binding subunit (601 aa).

A run of 12 helical transmembrane segments spans residues 3–23 (ASAWGLLALFLSVLGLLAWPL), 62–82 (HYALALLAFNALGVFAVYALQ), 132–152 (LGLSVQNFLSAATGIAVAFAL), 179–199 (AWVLVPLSFVLAVFLAGQGVI), 283–303 (LTNLAQMLAIFLVPAALCFAF), 314–334 (VAILAAMTLMFVVAVVAVTAA), 367–387 (FGISASALFAAVTTAASCGAV), 397–417 (LGGMVPMVLMQLGEVVFGGAG), 419–439 (GLYGMLVFAILAVFIAGLMIG), 459–479 (VAILVTPLLVLVGTAVAVLAP), 523–543 (VLLALAMWFGRFGVIVPVLAI), and 564–584 (GPLFVALLVFTVLLVGLLNYV).

It belongs to the KdpA family. The system is composed of three essential subunits: KdpA, KdpB and KdpC.

It is found in the cell inner membrane. Functionally, part of the high-affinity ATP-driven potassium transport (or Kdp) system, which catalyzes the hydrolysis of ATP coupled with the electrogenic transport of potassium into the cytoplasm. This subunit binds the periplasmic potassium ions and delivers the ions to the membrane domain of KdpB through an intramembrane tunnel. This Paracidovorax citrulli (strain AAC00-1) (Acidovorax citrulli) protein is Potassium-transporting ATPase potassium-binding subunit.